A 68-amino-acid polypeptide reads, in one-letter code: Conotoxin Cal14.13c (68 aa).

The signal sequence occupies residues 1–20 (MKLCVVXVLLMLAMPFNGGE). A propeptide spanning residues 21 to 68 (ASRFFNQHARSQRSGMKTRGIWCDPPCPEGETCRGGECSDEFNGDLGG) is cleaved from the precursor. Leucine amide is present on Leu66.

In terms of processing, contains 2 disulfide bonds. As to expression, expressed by the venom duct.

The protein localises to the secreted. In terms of biological role, probable neurotoxin with unknown target. Possibly targets ion channels. The polypeptide is Conotoxin Cal14.13c (Californiconus californicus (California cone)).